The following is a 392-amino-acid chain: Phosphoglycerate kinase (392 aa).

Substrate contacts are provided by residues 21-23 (DFN), Arg36, 59-62 (HLGR), Arg113, and Arg146. ATP-binding positions include Lys197, Glu319, and 345–348 (GGDT).

It belongs to the phosphoglycerate kinase family. Monomer.

It localises to the cytoplasm. The catalysed reaction is (2R)-3-phosphoglycerate + ATP = (2R)-3-phospho-glyceroyl phosphate + ADP. It participates in carbohydrate degradation; glycolysis; pyruvate from D-glyceraldehyde 3-phosphate: step 2/5. This chain is Phosphoglycerate kinase, found in Francisella tularensis subsp. tularensis (strain FSC 198).